A 412-amino-acid polypeptide reads, in one-letter code: Multifunctional CCA protein (412 aa).

ATP-binding residues include glycine 8 and arginine 11. CTP-binding residues include glycine 8 and arginine 11. Glutamate 21 and aspartate 23 together coordinate Mg(2+). ATP-binding residues include arginine 91, arginine 137, and arginine 140. Positions 91, 137, and 140 each coordinate CTP. In terms of domain architecture, HD spans 228–329 (CGIHTLMSLQ…WRLLQRLDVL (102 aa)).

It belongs to the tRNA nucleotidyltransferase/poly(A) polymerase family. Bacterial CCA-adding enzyme type 1 subfamily. Monomer. Can also form homodimers and oligomers. Mg(2+) is required as a cofactor. The cofactor is Ni(2+).

It carries out the reaction a tRNA precursor + 2 CTP + ATP = a tRNA with a 3' CCA end + 3 diphosphate. The catalysed reaction is a tRNA with a 3' CCA end + 2 CTP + ATP = a tRNA with a 3' CCACCA end + 3 diphosphate. In terms of biological role, catalyzes the addition and repair of the essential 3'-terminal CCA sequence in tRNAs without using a nucleic acid template. Adds these three nucleotides in the order of C, C, and A to the tRNA nucleotide-73, using CTP and ATP as substrates and producing inorganic pyrophosphate. tRNA 3'-terminal CCA addition is required both for tRNA processing and repair. Also involved in tRNA surveillance by mediating tandem CCA addition to generate a CCACCA at the 3' terminus of unstable tRNAs. While stable tRNAs receive only 3'-terminal CCA, unstable tRNAs are marked with CCACCA and rapidly degraded. The polypeptide is Multifunctional CCA protein (Acinetobacter baumannii (strain ATCC 17978 / DSM 105126 / CIP 53.77 / LMG 1025 / NCDC KC755 / 5377)).